A 233-amino-acid chain; its full sequence is Gamma-glutamyl-hercynylcysteine sulfoxide hydrolase (233 aa).

Cys-2 (nucleophile) is an active-site residue. Positions 2-233 (CRHLGWLGAQ…TALDRAKGPR (232 aa)) constitute a Glutamine amidotransferase type-2 domain.

The enzyme catalyses gamma-L-glutamyl-hercynylcysteine S-oxide + H2O = S-(hercyn-2-yl)-L-cysteine S-oxide + L-glutamate. It functions in the pathway amino-acid biosynthesis; ergothioneine biosynthesis. Functionally, catalyzes the hydrolysis of the gamma-glutamyl amide bond of hercynyl-gamma-L-glutamyl-L-cysteine sulfoxide to produce hercynylcysteine sulfoxide, a step in the biosynthesis pathway of ergothioneine. ERG is one of the major redox buffers which protects bacteria against redox stressors and antibiotics; loss of ERG or mycothiol (MSH, the other major redox buffer in this bacteria) leads to respiratory alterations and bioenergetic deficiencies that negatively impact virulence. The chain is Gamma-glutamyl-hercynylcysteine sulfoxide hydrolase from Mycobacterium tuberculosis (strain CDC 1551 / Oshkosh).